We begin with the raw amino-acid sequence, 227 residues long: Cytochrome c oxidase subunit 2 (227 aa).

Over 1-14 (MAYPVQLGFQDAAS) the chain is Mitochondrial intermembrane. Residues 15-45 (PIMEELLYFHDHTLMIMFLISSLVLYIISLM) form a helical membrane-spanning segment. Residues 46–59 (LTTELMHTNTMDAQ) lie on the Mitochondrial matrix side of the membrane. A helical transmembrane segment spans residues 60–87 (EVETVWTILPAAILILIALPSLRILYMM). The Mitochondrial intermembrane segment spans residues 88-227 (DEITTPSLTL…HFEEWLLSML (140 aa)). Cu cation contacts are provided by His161, Cys196, Glu198, Cys200, His204, and Met207. A Mg(2+)-binding site is contributed by Glu198.

It belongs to the cytochrome c oxidase subunit 2 family. In terms of assembly, component of the cytochrome c oxidase (complex IV, CIV), a multisubunit enzyme composed of 14 subunits. The complex is composed of a catalytic core of 3 subunits MT-CO1, MT-CO2 and MT-CO3, encoded in the mitochondrial DNA, and 11 supernumerary subunits COX4I, COX5A, COX5B, COX6A, COX6B, COX6C, COX7A, COX7B, COX7C, COX8 and NDUFA4, which are encoded in the nuclear genome. The complex exists as a monomer or a dimer and forms supercomplexes (SCs) in the inner mitochondrial membrane with NADH-ubiquinone oxidoreductase (complex I, CI) and ubiquinol-cytochrome c oxidoreductase (cytochrome b-c1 complex, complex III, CIII), resulting in different assemblies (supercomplex SCI(1)III(2)IV(1) and megacomplex MCI(2)III(2)IV(2)). Found in a complex with TMEM177, COA6, COX18, COX20, SCO1 and SCO2. Interacts with TMEM177 in a COX20-dependent manner. Interacts with COX20. Interacts with COX16. It depends on Cu cation as a cofactor.

Its subcellular location is the mitochondrion inner membrane. The catalysed reaction is 4 Fe(II)-[cytochrome c] + O2 + 8 H(+)(in) = 4 Fe(III)-[cytochrome c] + 2 H2O + 4 H(+)(out). Its function is as follows. Component of the cytochrome c oxidase, the last enzyme in the mitochondrial electron transport chain which drives oxidative phosphorylation. The respiratory chain contains 3 multisubunit complexes succinate dehydrogenase (complex II, CII), ubiquinol-cytochrome c oxidoreductase (cytochrome b-c1 complex, complex III, CIII) and cytochrome c oxidase (complex IV, CIV), that cooperate to transfer electrons derived from NADH and succinate to molecular oxygen, creating an electrochemical gradient over the inner membrane that drives transmembrane transport and the ATP synthase. Cytochrome c oxidase is the component of the respiratory chain that catalyzes the reduction of oxygen to water. Electrons originating from reduced cytochrome c in the intermembrane space (IMS) are transferred via the dinuclear copper A center (CU(A)) of subunit 2 and heme A of subunit 1 to the active site in subunit 1, a binuclear center (BNC) formed by heme A3 and copper B (CU(B)). The BNC reduces molecular oxygen to 2 water molecules using 4 electrons from cytochrome c in the IMS and 4 protons from the mitochondrial matrix. This is Cytochrome c oxidase subunit 2 (MT-CO2) from Lemur catta (Ring-tailed lemur).